The sequence spans 690 residues: DNA-directed RNA polymerase subunit beta' (690 aa).

Residues cysteine 76, cysteine 78, cysteine 94, and cysteine 97 each contribute to the Zn(2+) site. Aspartate 496, aspartate 498, and aspartate 500 together coordinate Mg(2+).

Belongs to the RNA polymerase beta' chain family. RpoC1 subfamily. In plastids the minimal PEP RNA polymerase catalytic core is composed of four subunits: alpha, beta, beta', and beta''. When a (nuclear-encoded) sigma factor is associated with the core the holoenzyme is formed, which can initiate transcription. It depends on Mg(2+) as a cofactor. Zn(2+) is required as a cofactor.

The protein localises to the plastid. The protein resides in the chloroplast. The enzyme catalyses RNA(n) + a ribonucleoside 5'-triphosphate = RNA(n+1) + diphosphate. In terms of biological role, DNA-dependent RNA polymerase catalyzes the transcription of DNA into RNA using the four ribonucleoside triphosphates as substrates. The sequence is that of DNA-directed RNA polymerase subunit beta' from Lemna minor (Common duckweed).